The primary structure comprises 241 residues: Uracil-DNA glycosylase (241 aa).

Catalysis depends on Asp-71, which acts as the Proton acceptor.

It belongs to the uracil-DNA glycosylase (UDG) superfamily. UNG family.

It localises to the cytoplasm. It catalyses the reaction Hydrolyzes single-stranded DNA or mismatched double-stranded DNA and polynucleotides, releasing free uracil.. Functionally, excises uracil residues from the DNA which can arise as a result of misincorporation of dUMP residues by DNA polymerase or due to deamination of cytosine. In Xanthomonas euvesicatoria pv. vesicatoria (strain 85-10) (Xanthomonas campestris pv. vesicatoria), this protein is Uracil-DNA glycosylase.